We begin with the raw amino-acid sequence, 289 residues long: ATP synthase gamma chain (289 aa).

The protein belongs to the ATPase gamma chain family. F-type ATPases have 2 components, CF(1) - the catalytic core - and CF(0) - the membrane proton channel. CF(1) has five subunits: alpha(3), beta(3), gamma(1), delta(1), epsilon(1). CF(0) has three main subunits: a, b and c.

The protein localises to the cell inner membrane. Its function is as follows. Produces ATP from ADP in the presence of a proton gradient across the membrane. The gamma chain is believed to be important in regulating ATPase activity and the flow of protons through the CF(0) complex. The chain is ATP synthase gamma chain from Janthinobacterium sp. (strain Marseille) (Minibacterium massiliensis).